The sequence spans 127 residues: Small ribosomal subunit protein uS11 (127 aa).

It belongs to the universal ribosomal protein uS11 family. In terms of assembly, part of the 30S ribosomal subunit. Interacts with proteins S7 and S18. Binds to IF-3.

Located on the platform of the 30S subunit, it bridges several disparate RNA helices of the 16S rRNA. Forms part of the Shine-Dalgarno cleft in the 70S ribosome. This Anaeromyxobacter sp. (strain Fw109-5) protein is Small ribosomal subunit protein uS11.